We begin with the raw amino-acid sequence, 710 residues long: F-box/WD repeat-containing protein 7 (710 aa).

Positions 1–158 (MNQELLSVGS…CSSVSDLPAH (158 aa)) are disordered. Residue S26 is modified to Phosphoserine. Residues 46-55 (RHQEEEHTAR) are compositionally biased toward basic and acidic residues. A compositionally biased stretch (polar residues) spans 69-84 (QNDTQQGQVEENNNRF). Positions 87 to 132 (VDEDSSGNQEEQEEDEEHAGEQEEEEEEEEEEEEMDQESDDFDPSD) are enriched in acidic residues. Over residues 133 to 142 (DSSREDEHTH) the composition is skewed to basic and acidic residues. Residues 143–158 (NSNVTNCSSVSDLPAH) are compositionally biased toward polar residues. Position 208 is a phosphothreonine (T208). At S230 the chain carries Phosphoserine; by SGK1. Residues 281–327 (RDFISLLPKELALYVLSFLEPKDLLQAAQTCRYWRILAEDNLLWREK) form the F-box domain. WD repeat units lie at residues 381-421 (GHDD…RTLV), 423-459 (HTGGVWSSQMRDNIIISGSTDRTLKVWNAETGECIHT), 462-501 (GHTSTVRCMHLHEKRVVSGSRDATLRVWDIETGQCLHVLM), 503-539 (HVAAVRCVQYDGRRVVSGAYDFMVKVWDPETETCLHT), 542-581 (GHTNRVYSLQFDGIHVVSGSLDTSIRVWDVETGNCIHTLT), 583-621 (HQSLTSGMELKDNILVSGNADSTVKIWDIKTGQCLQTLQ), and 625-662 (KHQSAVTCLQFNKNFVITSSDDGTVKLWDLKTGEFIRN).

In terms of assembly, homodimer; homodimerization plays a role in substrate binding and/or ubiquitination and degradation. Component of the SCF(FBXW7) complex consisting of CUL1, RBX1, SKP1 and FBXW7. Interacts (via F-box domain) with SKP1. Interacts (via F-box domain) with pseudophosphatase STYX; the interaction is direct and prevents FBXW7 interaction with SKP1. Interacts with cyclin-E (CCNE1 or CCNE2). Interacts with PSEN1. Forms a trimeric complex with NOTCH1 and SGK1. Interacts with NOTCH1 intracellular domain/NICD and NOTCH4 intracellular domain/NICD. Interacts with NOTCH2 intracellular domain (N2ICD). Interacts with MYC (when phosphorylated). Interacts with USP28, counteracting ubiquitination of MYC. Interacts (when phosphorylated at Thr-208) with PIN1, disrupting FBXW7 dimerization and promoting FBXW7 autoubiquitination and degradation. Interacts with UBE2QL1. Interacts with FAM83D; promotes FBXW7 degradation. Interacts with MYCN; FBXW7 competes with AURKA for binding to unphosphorylated MYCN but not for binding to phosphorylated MYCN. Interacts with JUN. Found in a complex with JUN and PRR7. Interacts with JUN and PRR7; the interaction inhibits ubiquitination-mediated JUN degradation, promoting its phosphorylation and transcriptional activity. Interacts with NFE2L1. Interacts with NR1D1. Interacts with RICTOR; mediates RICTOR ubiquitination and degradation. Interacts with USP38, counteracting ubiquitination of MYC. Phosphorylation at Thr-208 promotes interaction with PIN1, leading to disrupt FBXW7 dimerization and promoting FBXW7 autoubiquitination and degradation. Phosphorylated by ATM at Ser-26 in response to DNA damage, promoting recruitment to DNA damage sites and 'Lys-63'-linked ubiquitination of phosphorylated XRCC4. Post-translationally, ubiquitinated: autoubiquitinates following phosphorylation at Thr-208 and subsequent interaction with PIN1. Ubiquitination leads to its proteasomal degradation. In terms of tissue distribution, widely expressed with highest levels in brain, heart and testis.

It is found in the nucleus. The protein resides in the nucleoplasm. The protein localises to the chromosome. The protein operates within protein modification; protein ubiquitination. In terms of biological role, substrate recognition component of a SCF (SKP1-CUL1-F-box protein) E3 ubiquitin-protein ligase complex which mediates the ubiquitination and subsequent proteasomal degradation of target proteins. Recognizes and binds phosphorylated sites/phosphodegrons within target proteins and thereafter brings them to the SCF complex for ubiquitination. Mediates ubiquitination and subsequent degradation of CCNE1 and MYC. Identified substrates include cyclin-E (CCNE1 or CCNE2), DISC1, JUN, MYC, NOTCH1 released notch intracellular domain (NICD), NOTCH2, MCL1, MLST8, RICTOR and probably PSEN1. Acts as a negative regulator of JNK signaling by binding to phosphorylated JUN and promoting its ubiquitination and subsequent degradation. SCF(FBXW7) complex mediates the ubiquitination and subsequent degradation of NFE2L1. Involved in bone homeostasis and negative regulation of osteoclast differentiation. Regulates the amplitude of the cyclic expression of hepatic core clock genes and genes involved in lipid and glucose metabolism via ubiquitination and proteasomal degradation of their transcriptional repressor NR1D1; CDK1-dependent phosphorylation of NR1D1 is necessary for SCF(FBXW7)-mediated ubiquitination. Also able to promote 'Lys-63'-linked ubiquitination in response to DNA damage. The SCF(FBXW7) complex facilitates double-strand break repair following phosphorylation by ATM: phosphorylation promotes localization to sites of double-strand breaks and 'Lys-63'-linked ubiquitination of phosphorylated XRCC4, enhancing DNA non-homologous end joining. This chain is F-box/WD repeat-containing protein 7, found in Mus musculus (Mouse).